Reading from the N-terminus, the 439-residue chain is Exodeoxyribonuclease 7 large subunit (439 aa).

The protein belongs to the XseA family. As to quaternary structure, heterooligomer composed of large and small subunits.

It localises to the cytoplasm. It catalyses the reaction Exonucleolytic cleavage in either 5'- to 3'- or 3'- to 5'-direction to yield nucleoside 5'-phosphates.. Functionally, bidirectionally degrades single-stranded DNA into large acid-insoluble oligonucleotides, which are then degraded further into small acid-soluble oligonucleotides. The chain is Exodeoxyribonuclease 7 large subunit from Haemophilus influenzae (strain 86-028NP).